Consider the following 351-residue polypeptide: Phosphoribosylformylglycinamidine cyclo-ligase (351 aa).

The protein belongs to the AIR synthase family.

It localises to the cytoplasm. It carries out the reaction 2-formamido-N(1)-(5-O-phospho-beta-D-ribosyl)acetamidine + ATP = 5-amino-1-(5-phospho-beta-D-ribosyl)imidazole + ADP + phosphate + H(+). Its pathway is purine metabolism; IMP biosynthesis via de novo pathway; 5-amino-1-(5-phospho-D-ribosyl)imidazole from N(2)-formyl-N(1)-(5-phospho-D-ribosyl)glycinamide: step 2/2. This chain is Phosphoribosylformylglycinamidine cyclo-ligase, found in Burkholderia mallei (strain NCTC 10247).